A 501-amino-acid chain; its full sequence is Geissoschizine oxidase (501 aa).

Residues 1 to 21 (MEFSFSSPALYIVYFLLFFVV) form a helical membrane-spanning segment. A glycan (N-linked (GlcNAc...) asparagine) is linked at N60. C442 is a heme binding site.

This sequence belongs to the cytochrome P450 family. Heme serves as cofactor. As to expression, expressed in leaf epidermis. Also present in the leaf internal phloem-associated parenchyma (IPAP) inside the mesophyll.

It localises to the membrane. The enzyme catalyses (19E)-geissoschizine + reduced [NADPH--hemoprotein reductase] + O2 = akuammicine + formate + oxidized [NADPH--hemoprotein reductase] + H2O + H(+). It carries out the reaction (19E)-geissoschizine + reduced [NADPH--hemoprotein reductase] + O2 = 3,17-didehydrostemmadenine + oxidized [NADPH--hemoprotein reductase] + 2 H2O. It functions in the pathway alkaloid biosynthesis. Component of the seco-iridoid and derivatives monoterpenoid indole alkaloids (MIAs, e.g. vincristine, quinine, and strychnine) biosynthesis pathway. Catalyzes the oxidation of 19E-geissoschizine to produce a short-lived MIA unstable intermediate which can be spontaneously converted into akuammicine or oxidized by Redox1 and Redox2 to produce stemmadenine and 16S/R-deshydroxymethylstemmadenine (16S/R-DHS). The polypeptide is Geissoschizine oxidase (Catharanthus roseus (Madagascar periwinkle)).